Consider the following 444-residue polypeptide: Argininosuccinate synthase (444 aa).

Residues alanine 18–serine 26 and alanine 44 contribute to the ATP site. Tyrosine 100 contacts L-citrulline. 2 residues coordinate ATP: glycine 130 and threonine 132. Residues threonine 132, asparagine 136, and aspartate 137 each contribute to the L-aspartate site. Residue asparagine 136 participates in L-citrulline binding. Aspartate 137 serves as a coordination point for ATP. L-citrulline-binding residues include arginine 140 and serine 193. Aspartate 195 contacts ATP. The L-citrulline site is built by threonine 202, glutamate 204, and glutamate 281.

Belongs to the argininosuccinate synthase family. Type 2 subfamily. Homotetramer.

The protein localises to the cytoplasm. The catalysed reaction is L-citrulline + L-aspartate + ATP = 2-(N(omega)-L-arginino)succinate + AMP + diphosphate + H(+). Its pathway is amino-acid biosynthesis; L-arginine biosynthesis; L-arginine from L-ornithine and carbamoyl phosphate: step 2/3. In Mannheimia succiniciproducens (strain KCTC 0769BP / MBEL55E), this protein is Argininosuccinate synthase.